The primary structure comprises 382 residues: 1-deoxy-D-xylulose 5-phosphate reductoisomerase (382 aa).

Residues threonine 10, glycine 11, serine 12, isoleucine 13, asparagine 38, and asparagine 120 each contribute to the NADPH site. 1-deoxy-D-xylulose 5-phosphate is bound at residue lysine 121. An NADPH-binding site is contributed by glutamate 122. Residue aspartate 146 coordinates Mn(2+). Serine 147, glutamate 148, serine 172, and histidine 195 together coordinate 1-deoxy-D-xylulose 5-phosphate. Position 148 (glutamate 148) interacts with Mn(2+). NADPH is bound at residue glycine 201. Serine 208, asparagine 213, lysine 214, and glutamate 217 together coordinate 1-deoxy-D-xylulose 5-phosphate. Glutamate 217 contributes to the Mn(2+) binding site.

Belongs to the DXR family. Mg(2+) is required as a cofactor. Mn(2+) serves as cofactor.

The catalysed reaction is 2-C-methyl-D-erythritol 4-phosphate + NADP(+) = 1-deoxy-D-xylulose 5-phosphate + NADPH + H(+). It participates in isoprenoid biosynthesis; isopentenyl diphosphate biosynthesis via DXP pathway; isopentenyl diphosphate from 1-deoxy-D-xylulose 5-phosphate: step 1/6. Catalyzes the NADPH-dependent rearrangement and reduction of 1-deoxy-D-xylulose-5-phosphate (DXP) to 2-C-methyl-D-erythritol 4-phosphate (MEP). This chain is 1-deoxy-D-xylulose 5-phosphate reductoisomerase, found in Thermoanaerobacter pseudethanolicus (strain ATCC 33223 / 39E) (Clostridium thermohydrosulfuricum).